The sequence spans 89 residues: Albumin-1 (89 aa).

A signal peptide is located at residue Ala1. Intrachain disulfides connect Cys4–Cys21, Cys8–Cys23, and Cys16–Cys33. Residues 39–46 (LSSVAKMI) constitute a propeptide that is removed on maturation.

Post-translationally, the C-terminal glycine may be removed from A1b.

In terms of biological role, A1b binds to basic 7S globulin (BG) and stimulates its phosphorylation activity. The polypeptide is Albumin-1 (LEG) (Vigna radiata var. radiata (Mung bean)).